The following is a 273-amino-acid chain: 5-deoxy-glucuronate isomerase (273 aa).

Belongs to the isomerase IolB family.

The catalysed reaction is 5-deoxy-D-glucuronate = 5-dehydro-2-deoxy-D-gluconate. It functions in the pathway polyol metabolism; myo-inositol degradation into acetyl-CoA; acetyl-CoA from myo-inositol: step 4/7. Functionally, involved in the isomerization of 5-deoxy-glucuronate (5DG) to 5-dehydro-2-deoxy-D-gluconate (DKG or 2-deoxy-5-keto-D-gluconate). This Listeria monocytogenes serovar 1/2a (strain ATCC BAA-679 / EGD-e) protein is 5-deoxy-glucuronate isomerase.